We begin with the raw amino-acid sequence, 299 residues long: Tyrosine recombinase XerC (299 aa).

Residues 1–85 form the Core-binding (CB) domain; the sequence is MEQHLDAYCM…AVRGFYKYLN (85 aa). The 180-residue stretch at 106–285 folds into the Tyr recombinase domain; sequence RLPKTLDTDR…DFQHLATVYD (180 aa). Catalysis depends on residues Arg-146, Lys-170, His-237, Arg-240, and His-263. Tyr-272 functions as the O-(3'-phospho-DNA)-tyrosine intermediate in the catalytic mechanism.

The protein belongs to the 'phage' integrase family. XerC subfamily. As to quaternary structure, forms a cyclic heterotetrameric complex composed of two molecules of XerC and two molecules of XerD.

The protein localises to the cytoplasm. In terms of biological role, site-specific tyrosine recombinase, which acts by catalyzing the cutting and rejoining of the recombining DNA molecules. The XerC-XerD complex is essential to convert dimers of the bacterial chromosome into monomers to permit their segregation at cell division. It also contributes to the segregational stability of plasmids. The sequence is that of Tyrosine recombinase XerC from Pseudomonas syringae pv. tomato (strain ATCC BAA-871 / DC3000).